A 212-amino-acid polypeptide reads, in one-letter code: Large ribosomal subunit protein uL3 (212 aa).

Glutamine 153 carries the N5-methylglutamine modification.

Belongs to the universal ribosomal protein uL3 family. In terms of assembly, part of the 50S ribosomal subunit. Forms a cluster with proteins L14 and L19. Methylated by PrmB.

In terms of biological role, one of the primary rRNA binding proteins, it binds directly near the 3'-end of the 23S rRNA, where it nucleates assembly of the 50S subunit. This is Large ribosomal subunit protein uL3 from Shewanella loihica (strain ATCC BAA-1088 / PV-4).